The sequence spans 709 residues: ATP-binding cassette sub-family F member 3 (709 aa).

A2 carries the post-translational modification N-acetylalanine. Residue S83 is modified to Phosphoserine. The span at 129-143 (RLKAKQEKRSEKDTL) shows a compositional bias: basic and acidic residues. The segment at 129–171 (RLKAKQEKRSEKDTLKTSNPLVLEEASASQAGSRKESRLESSG) is disordered. A phosphoserine mark is found at S155, S157, and S161. Over residues 161–171 (SRKESRLESSG) the composition is skewed to basic and acidic residues. ABC transporter domains lie at 178 to 424 (VRIE…LNQQ) and 492 to 707 (LQLD…RREG). Residue 210-217 (GRNGLGKT) participates in ATP binding. S283 carries the post-translational modification Phosphoserine. 525–532 (GENGAGKS) provides a ligand contact to ATP.

The protein belongs to the ABC transporter superfamily. ABCF family. EF3 subfamily.

Functionally, displays an antiviral effect against flaviviruses such as west Nile virus (WNV) in the presence of OAS1B. This chain is ATP-binding cassette sub-family F member 3 (ABCF3), found in Homo sapiens (Human).